A 1342-amino-acid polypeptide reads, in one-letter code: DNA-directed RNA polymerase subunit beta (1342 aa).

N6-acetyllysine is present on residues K1022 and K1200.

The protein belongs to the RNA polymerase beta chain family. In terms of assembly, the RNAP catalytic core consists of 2 alpha, 1 beta, 1 beta' and 1 omega subunit. When a sigma factor is associated with the core the holoenzyme is formed, which can initiate transcription.

It carries out the reaction RNA(n) + a ribonucleoside 5'-triphosphate = RNA(n+1) + diphosphate. DNA-dependent RNA polymerase catalyzes the transcription of DNA into RNA using the four ribonucleoside triphosphates as substrates. This Escherichia fergusonii (strain ATCC 35469 / DSM 13698 / CCUG 18766 / IAM 14443 / JCM 21226 / LMG 7866 / NBRC 102419 / NCTC 12128 / CDC 0568-73) protein is DNA-directed RNA polymerase subunit beta.